We begin with the raw amino-acid sequence, 201 residues long: Glycerol-3-phosphate acyltransferase (201 aa).

6 helical membrane-spanning segments follow: residues 10-30 (MLIGALIFGYVLGSIPFGLIL), 60-80 (LAAATLILDALKGTAAALIAA), 86-106 (AAIAAGFGAFIGHLFPVWIGF), 116-136 (LGVLIGLAWAGALVFAAAWIV), 139-159 (LLTRYSSLSALVASLVVPIAL), and 166-186 (ALAALFAIMTVIVFIKHRANI).

Belongs to the PlsY family. As to quaternary structure, probably interacts with PlsX.

It is found in the cell inner membrane. The catalysed reaction is an acyl phosphate + sn-glycerol 3-phosphate = a 1-acyl-sn-glycero-3-phosphate + phosphate. The protein operates within lipid metabolism; phospholipid metabolism. Its function is as follows. Catalyzes the transfer of an acyl group from acyl-phosphate (acyl-PO(4)) to glycerol-3-phosphate (G3P) to form lysophosphatidic acid (LPA). This enzyme utilizes acyl-phosphate as fatty acyl donor, but not acyl-CoA or acyl-ACP. In Brucella ovis (strain ATCC 25840 / 63/290 / NCTC 10512), this protein is Glycerol-3-phosphate acyltransferase.